An 872-amino-acid chain; its full sequence is Leucine--tRNA ligase (872 aa).

The 'HIGH' region signature appears at 42-52; that stretch reads PYPSGSLHMGH. Positions 634–638 match the 'KMSKS' region motif; it reads TMSKS. Lys-637 serves as a coordination point for ATP.

It belongs to the class-I aminoacyl-tRNA synthetase family.

It is found in the cytoplasm. It carries out the reaction tRNA(Leu) + L-leucine + ATP = L-leucyl-tRNA(Leu) + AMP + diphosphate. This is Leucine--tRNA ligase from Trichormus variabilis (strain ATCC 29413 / PCC 7937) (Anabaena variabilis).